The sequence spans 150 residues: Non-structural protein (150 aa).

The segment at 93–140 (PLFRIRFLLLIMSDSISLTDITISPGTLYSARTLLLRAAVLALTRKPM) is apoptotic activity.

Its function is as follows. Disrupts the host mitochondrial membrane potential and induces apoptosis probably by inducing host CASP8 and CASP9. The protein is Non-structural protein of Bos taurus (Bovine).